Here is a 400-residue protein sequence, read N- to C-terminus: uncharacterized protein (400 aa).

The first 31 residues, 1 to 31 (MENPIKPVATRSIGIAVVLLVVGIVIGFAVG), serve as a signal peptide directing secretion.

The protein belongs to the bacterial solute-binding protein 1 family. WtpA subfamily.

This is an uncharacterized protein from Thermoplasma acidophilum (strain ATCC 25905 / DSM 1728 / JCM 9062 / NBRC 15155 / AMRC-C165).